The sequence spans 1097 residues: Leukemia inhibitory factor receptor (1097 aa).

An N-terminal signal peptide occupies residues 1–44 (MMDIYVCLKRPSWMVDNKRMRTASNFQWLLSTFILLYLMNQVNS). Over 45-833 (QKKGAPHDLK…SMYVVTKENS (789 aa)) the chain is Extracellular. Residues 49–138 (APHDLKCVTN…EQNVSLIPDT (90 aa)) form the Fibronectin type-III 1 domain. 2 cysteine pairs are disulfide-bonded: Cys-55–Cys-65 and Cys-82–Cys-90. 7 N-linked (GlcNAc...) asparagine glycosylation sites follow: Asn-64, Asn-85, Asn-131, Asn-143, Asn-191, Asn-243, and Asn-303. Cysteines 213 and 270 form a disulfide. 5 Fibronectin type-III domains span residues 335 to 434 (TPQQ…VYPH), 435 to 534 (TPTS…TEAS), 538 to 629 (GPDT…IPND), 627 to 719 (PNDD…IGYI), and 724 to 833 (PIVA…KENS). Cys-341 and Cys-351 are disulfide-bonded. Asn-390, Asn-407, Asn-426, Asn-445, Asn-481, and Asn-489 each carry an N-linked (GlcNAc...) asparagine glycan. The cysteines at positions 466 and 511 are disulfide-linked. The WSXWS motif signature appears at 519–523 (WSKWS). N-linked (GlcNAc...) asparagine glycosylation is found at Asn-572, Asn-652, Asn-663, Asn-680, Asn-729, and Asn-787. Residues 834 to 858 (VGLIIAILIPVAVAVIVGVVTSILC) form a helical membrane-spanning segment. The Cytoplasmic segment spans residues 859–1097 (YRKREWIKET…TNFFQNKPND (239 aa)). The Box 1 motif motif lies at 869–877 (FYPDIPNPE). The residue at position 927 (Ser-927) is a Phosphoserine. Positions 983–1005 (PQAKPEEEQENDPVGGAGYKPQM) are disordered. A Phosphoserine modification is found at Ser-1044. Positions 1066 to 1097 (RQFLIPPKDEDSPKSNGGGWSFTNFFQNKPND) are disordered. Residues 1086–1097 (SFTNFFQNKPND) show a composition bias toward polar residues.

This sequence belongs to the type I cytokine receptor family. Type 2 subfamily. As to quaternary structure, heterodimer composed of LIFR and IL6ST. The heterodimer formed by LIFR and IL6ST interacts with the complex formed by CNTF and CNTFR.

Its subcellular location is the cell membrane. The protein resides in the secreted. Its function is as follows. Signal-transducing molecule. May have a common pathway with IL6ST. The soluble form inhibits the biological activity of LIF by blocking its binding to receptors on target cells. The polypeptide is Leukemia inhibitory factor receptor (LIFR) (Homo sapiens (Human)).